Consider the following 753-residue polypeptide: Ribosome biogenesis protein BOP1 homolog (753 aa).

Positions 1-155 are disordered; sequence MTKRSKGANE…RNTVGNVPLK (155 aa). Composition is skewed to basic and acidic residues over residues 7–18 and 30–41; these read GANEDKLIETKS and KPVEAESLKEED. Composition is skewed to acidic residues over residues 64 to 75 and 83 to 109; these read DDFDSDFSDSED and EDGDVEFSDDDDVLEHDGSIDNEDDDG. Basic and acidic residues predominate over residues 110 to 121; sequence SEHVGSDNNEEH. The span at 122 to 142 shows a compositional bias: acidic residues; the sequence is GSDEDSERGEAVEESDSSEDE. 6 WD repeats span residues 421–462, 464–502, 539–581, 626–665, 669–708, and 722–753; these read GHTG…KVWQ, DEAIMCVAWNPLSRLPVLAVAMGRDLFFLNTELGTDEEQ, RHFK…TQRL, TGLREISSMAIHPGGDNLIVGSKEGKMCWFDMDLSSKPYK, NHPKDITNVAVHRSYPLFASCSEDSTAYVFHGMVYNDLNQ, and SSKGGVLDCKFHPRQPWLFTAGADSIIKLYCH.

It belongs to the WD repeat BOP1/ERB1 family. In terms of assembly, interacts with PES. Interacts with WDR12.

Its subcellular location is the nucleus. The protein localises to the nucleolus. It is found in the nucleoplasm. Its function is as follows. Required for maturation of ribosomal RNAs and formation of the large ribosomal subunit. Plays an essential role in cell growth and survival through its regulation of ribosome biogenesis and mitotic progression. In Arabidopsis thaliana (Mouse-ear cress), this protein is Ribosome biogenesis protein BOP1 homolog.